Reading from the N-terminus, the 154-residue chain is 17.0 kDa class II heat shock protein (154 aa).

The sHSP domain maps to 39-154 (DARAMAATPA…KPKTIEIKVA (116 aa)).

This sequence belongs to the small heat shock protein (HSP20) family.

Its subcellular location is the cytoplasm. This is 17.0 kDa class II heat shock protein (HSP18) from Zea mays (Maize).